The chain runs to 1457 residues: NBPF family member NBPF12 (1457 aa).

Residues 75-119 are a coiled coil; that stretch reads RQFKEEKLAEQLKQAEELRQYKVLVHSQERELTQLREKLREGRDA. Positions 162–200 are disordered; the sequence is LSPENDEDEDEDVQVEEDEKVLESSAPREVQKAEESKVP. Residues 165-181 are compositionally biased toward acidic residues; that stretch reads ENDEDEDEDVQVEEDEK. An Olduvai 1 domain is found at 165–259; the sequence is ENDEDEDEDV…ECQDALNILP (95 aa). Basic and acidic residues predominate over residues 190–200; it reads EVQKAEESKVP. A coiled-coil region spans residues 339-390; it reads KSMLRNELQFKEEKLAEQLKQAEELRQYKVLVHSQERELTQLREKLREGRDA. A disordered region spans residues 432-472; sequence KLSPENDEDEDEDVQVEEDEKVLESSSPREMQKAEESKVPE. Residues 436–452 are compositionally biased toward acidic residues; it reads ENDEDEDEDVQVEEDEK. An Olduvai 2 domain is found at 436 to 530; sequence ENDEDEDEDV…ECQDALNILP (95 aa). Over residues 461-472 the composition is skewed to basic and acidic residues; sequence EMQKAEESKVPE. A coiled-coil region spans residues 610 to 661; that stretch reads KSMLRNELQFKEEKLAEQLKQAEELRQYKVLVHSQERELTQLREKLREGRDA. Olduvai domains are found at residues 707–799, 800–871, 872–963, 966–1021, 1022–1114, 1115–1207, 1210–1265, 1266–1358, and 1359–1457; these read ENDN…HIIP, ENES…VDIG, RHRW…PSCP, SREL…LDVD, RIKK…RSKK, KRRR…PSCP, and KRRR…IFPQ. Disordered regions lie at residues 721–746 and 791–838; these read AEKV…EDSL and WEDA…GYST. Composition is skewed to acidic residues over residues 801 to 810 and 821 to 833; these read NESDDEEEEE and ESEE…ESWD. The segment at 1100–1139 is disordered; that stretch reads KKGKGKKRRGRRSKKKRRRGRKEGEEDQNPPCPRLSRELL. Basic residues predominate over residues 1102–1120; sequence GKGKKRRGRRSKKKRRRGR. The tract at residues 1344-1378 is disordered; sequence KKGKGKKRRGRRSKKKRRRGRKEGEEDQNPPCPRL. Positions 1346–1364 are enriched in basic residues; the sequence is GKGKKRRGRRSKKKRRRGR.

The protein belongs to the NBPF family. As to expression, widely expressed with highest levels in brain, ovary, mammary gland, skin and adipose tissue. Also expressed in testis. Detected in a number of tumors including osteosarcoma, mammary carcinoma and hepatocellular carcinoma.

Its subcellular location is the cytoplasm. The polypeptide is NBPF family member NBPF12 (Homo sapiens (Human)).